The chain runs to 812 residues: Plasminogen (812 aa).

A signal peptide spans 1 to 19; it reads MDHKEIILLFLLFLKPGQG. The PAN domain maps to 20–98; it reads DSLDGYVSTQ…RDVILFEKRV (79 aa). 21 disulfides stabilise this stretch: Cys-49–Cys-73, Cys-53–Cys-61, Cys-103–Cys-181, Cys-124–Cys-164, Cys-152–Cys-176, Cys-185–Cys-262, Cys-188–Cys-316, Cys-206–Cys-245, Cys-234–Cys-257, Cys-275–Cys-352, Cys-296–Cys-335, Cys-324–Cys-347, Cys-376–Cys-454, Cys-397–Cys-437, Cys-425–Cys-449, Cys-481–Cys-560, Cys-502–Cys-543, Cys-531–Cys-555, Cys-568–Cys-687, Cys-578–Cys-586, and Cys-609–Cys-625. Kringle domains are found at residues 102 to 181, 184 to 262, 274 to 352, 375 to 454, and 480 to 560; these read ECKT…IPEC, ECMY…IPRC, QCLK…IPSC, ECYQ…LKRC, and DCMY…IPLC. Residues 582–810 enclose the Peptidase S1 domain; it reads VVGGCVANPH…YVNWIEREMR (229 aa). At Ser-598 the chain carries Phosphoserine. Residues His-624 and Asp-667 each act as charge relay system in the active site. Residue Ser-690 is modified to Phosphoserine. 3 cysteine pairs are disulfide-bonded: Cys-701–Cys-768, Cys-731–Cys-747, and Cys-758–Cys-786. Residue Ser-762 is the Charge relay system of the active site.

The protein belongs to the peptidase S1 family. Plasminogen subfamily. As to quaternary structure, interacts (both mature PLG and the angiostatin peptide) with AMOT and CSPG4. Interacts (via the Kringle domains) with HRG; the interaction tethers PLG to the cell surface and enhances its activation. Interacts (via Kringle 4 domain) with ADA; the interaction stimulates PLG activation when in complex with DPP4. Angiostatin: Interacts with ATP5F1A; the interaction inhibits most of the angiogenic effects of angiostatin. In terms of processing, in the presence of the inhibitor, the activation involves only cleavage after Arg-581, yielding two chains held together by two disulfide bonds. In the absence of the inhibitor, the activation involves additionally the removal of the activation peptide.

It is found in the secreted. It carries out the reaction Preferential cleavage: Lys-|-Xaa &gt; Arg-|-Xaa, higher selectivity than trypsin. Converts fibrin into soluble products.. With respect to regulation, converted into plasmin by plasminogen activators, both plasminogen and its activator being bound to fibrin. Cannot be activated with streptokinase. Functionally, plasmin dissolves the fibrin of blood clots and acts as a proteolytic factor in a variety of other processes including embryonic development, tissue remodeling, tumor invasion, and inflammation. In ovulation, weakens the walls of the Graafian follicle. It activates the urokinase-type plasminogen activator, collagenases and several complement zymogens, such as C1, C4 and C5. Cleavage of fibronectin and laminin leads to cell detachment and apoptosis. Also cleaves fibrin, thrombospondin and von Willebrand factor. Its role in tissue remodeling and tumor invasion may be modulated by CSPG4. Binds to cells. In terms of biological role, angiostatin is an angiogenesis inhibitor that blocks neovascularization and growth of experimental primary and metastatic tumors in vivo. In Rattus norvegicus (Rat), this protein is Plasminogen (Plg).